The chain runs to 210 residues: Urease accessory protein UreG (210 aa).

14 to 21 (GPVGSGKT) provides a ligand contact to GTP.

The protein belongs to the SIMIBI class G3E GTPase family. UreG subfamily. Homodimer. UreD, UreF and UreG form a complex that acts as a GTP-hydrolysis-dependent molecular chaperone, activating the urease apoprotein by helping to assemble the nickel containing metallocenter of UreC. The UreE protein probably delivers the nickel.

The protein localises to the cytoplasm. Functionally, facilitates the functional incorporation of the urease nickel metallocenter. This process requires GTP hydrolysis, probably effectuated by UreG. This Rhodopseudomonas palustris (strain BisA53) protein is Urease accessory protein UreG.